The chain runs to 132 residues: U10-hexatoxin-Hi1a (132 aa).

A signal peptide spans 1–20 (MKGFIVFSLSLCLVFTVCLA). Residues 21 to 30 (EDELMKEAVR) constitute a propeptide that is removed on maturation.

In terms of processing, contains 5 disulfide bonds. In terms of tissue distribution, expressed by the venom gland.

The protein resides in the secreted. Functionally, probable ion channel inhibitor. This is U10-hexatoxin-Hi1a from Hadronyche infensa (Fraser island funnel-web spider).